The primary structure comprises 239 residues: Small ribosomal subunit protein uS2 (239 aa).

The protein belongs to the universal ribosomal protein uS2 family.

The chain is Small ribosomal subunit protein uS2 from Synechococcus sp. (strain WH7803).